A 253-amino-acid chain; its full sequence is Sulfate transporter CysZ (253 aa).

4 consecutive transmembrane segments (helical) span residues 31-51 (FVILPLLVNILLMGGAFWWLF), 75-95 (LLWPLAVISVLLVFGYFFSTI), 151-171 (IVLLILYFIPGIGQTVAPVLW), and 222-242 (IPLLNLFIMPVAVCGATAMWV).

The protein belongs to the CysZ family.

The protein resides in the cell inner membrane. Functionally, high affinity, high specificity proton-dependent sulfate transporter, which mediates sulfate uptake. Provides the sulfur source for the cysteine synthesis pathway. The chain is Sulfate transporter CysZ from Escherichia coli O127:H6 (strain E2348/69 / EPEC).